The chain runs to 319 residues: Guanidinobutyrase (319 aa).

Mn(2+) contacts are provided by histidine 129, aspartate 152, histidine 154, aspartate 156, aspartate 243, and aspartate 245.

The protein belongs to the arginase family. Agmatinase subfamily. As to quaternary structure, homohexamer. Requires Mn(2+) as cofactor.

The catalysed reaction is 4-guanidinobutanoate + H2O = urea + 4-aminobutanoate. Catalyzes specifically the hydrolysis of 4-guanidinobutanoate to 4-aminobutanoate and urea. Has no activity against arginine, agmatine, 3-guanidinopropionate and guanidinoacetate. The protein is Guanidinobutyrase (gbuA) of Pseudomonas aeruginosa (strain ATCC 15692 / DSM 22644 / CIP 104116 / JCM 14847 / LMG 12228 / 1C / PRS 101 / PAO1).